Here is a 623-residue protein sequence, read N- to C-terminus: Chaperone protein DnaK (623 aa).

Residues 582–603 (QQQQAAEQAAQQQSGGQQASGS) show a composition bias toward low complexity. The tract at residues 582–623 (QQQQAAEQAAQQQSGGQQASGSNPGKDPNVVDADYEVVNDKK) is disordered. A compositionally biased stretch (acidic residues) spans 614–623 (ADYEVVNDKK).

This sequence belongs to the heat shock protein 70 family.

Acts as a chaperone. In Methanocella arvoryzae (strain DSM 22066 / NBRC 105507 / MRE50), this protein is Chaperone protein DnaK.